The chain runs to 179 residues: Protein GrpE (179 aa).

The segment at 1-29 is disordered; the sequence is MQDQDKYAEQAASIEDPVTAEAASATTPT.

This sequence belongs to the GrpE family. Homodimer.

It is found in the cytoplasm. Its function is as follows. Participates actively in the response to hyperosmotic and heat shock by preventing the aggregation of stress-denatured proteins, in association with DnaK and GrpE. It is the nucleotide exchange factor for DnaK and may function as a thermosensor. Unfolded proteins bind initially to DnaJ; upon interaction with the DnaJ-bound protein, DnaK hydrolyzes its bound ATP, resulting in the formation of a stable complex. GrpE releases ADP from DnaK; ATP binding to DnaK triggers the release of the substrate protein, thus completing the reaction cycle. Several rounds of ATP-dependent interactions between DnaJ, DnaK and GrpE are required for fully efficient folding. The polypeptide is Protein GrpE (Janthinobacterium sp. (strain Marseille) (Minibacterium massiliensis)).